A 644-amino-acid chain; its full sequence is Sodium/hydrogen exchanger 9 (644 aa).

At 1–20 (MERQRRFMSEKDEYQFQHQG) the chain is on the lumenal side. The chain crosses the membrane as a helical span at residues 21-41 (AVELLVFNFLLILTILTIWLF). At 42–45 (KNHR) the chain is on the cytoplasmic side. The helical transmembrane segment at 46 to 66 (FRFLHETGGAMVYGLIMGLIL) threads the bilayer. Over 67 to 126 (RYATAPTDIESGTVYDCGKLAFSPSTLLINITDQVYEYKYKREISQHNINPHLGNAILEK) the chain is Lumenal. Residues 127 to 147 (MTFDPEIFFNVLLPPIIFHAG) form a helical membrane-spanning segment. Residues 148-164 (YSLKKRHFFQNLGSILT) lie on the Cytoplasmic side of the membrane. The helical transmembrane segment at 165–185 (YAFLGTAISCIVIGLIMYGFV) threads the bilayer. At 186–203 (KAMVYAGQLKNGDFHFTD) the chain is on the lumenal side. Residues 204-224 (CLFFGSLMSATDPVTVLAIFH) traverse the membrane as a helical segment. Topologically, residues 225 to 235 (ELHVDPDLYTL) are cytoplasmic. A helical transmembrane segment spans residues 236–256 (LFGESVLNDAVAIVLTYSISI). The Lumenal segment spans residues 257–277 (YSPKENPNAFDAAAFFQSVGN). A helical membrane pass occupies residues 278-298 (FLGIFAGSFAMGSAYAVVTAL). Residues 299–301 (LTK) lie on the Cytoplasmic side of the membrane. The next 2 membrane-spanning stretches (helical) occupy residues 302-322 (FTKL…LSWS) and 323-343 (AFLS…FCGV). Residues 344-364 (TQAHYTYNNLSLDSKMRTKQL) are Cytoplasmic-facing. A helical membrane pass occupies residues 365-385 (FEFMNFLAENVIFCYMGLALF). Position 386 (threonine 386) is a topological domain, lumenal. The chain crosses the membrane as a helical span at residues 387-407 (FQNHIFNALFILGAFLAIFVA). Over 408–429 (RACNIYPLSFLLNLGRKHKIPW) the chain is Cytoplasmic. A helical transmembrane segment spans residues 430–450 (NFQHMMMFSGLRGAIAFALAI). Residues 451-465 (RDTESQPKQMMFSTT) are Lumenal-facing. A helical membrane pass occupies residues 466 to 486 (LLLVFFTVWVFGGGTTPMLTW). Topologically, residues 487 to 644 (LQIRVGVDLD…EQTPGQSQLN (158 aa)) are cytoplasmic. The interval 593–622 (QAASPCSPPTRLGLDQKAAPQTPGKENIYE) is disordered.

This sequence belongs to the monovalent cation:proton antiporter 1 (CPA1) transporter (TC 2.A.36) family. Homodimer; phosphatidylinositol-4,5-bisphosphate (PIP2) and phosphatidylinositol 3,4,5-trisphosphate (PIP3) could be involved in the dimer stabilization. Interacts (via the C-terminus) with RACK1. Interacts with CHP1.

The protein localises to the late endosome membrane. It localises to the early endosome membrane. Its subcellular location is the recycling endosome membrane. The protein resides in the cell membrane. It is found in the cytoplasmic vesicle. The protein localises to the phagosome membrane. The catalysed reaction is Na(+)(in) + H(+)(out) = Na(+)(out) + H(+)(in). The enzyme catalyses K(+)(in) + H(+)(out) = K(+)(out) + H(+)(in). Endosomal Na(+), K(+)/H(+) antiporter. Mediates the electroneutral exchange of endosomal luminal H(+) for a cytosolic Na(+) or K(+). By facilitating proton efflux, SLC9A9 counteracts the acidity generated by vacuolar (V)-ATPase, thereby limiting luminal acidification. Regulates organellar pH and consequently, endosome maturation and endocytic trafficking of plasma membrane receptors and neurotransporters. Promotes the recycling of transferrin receptors back to the cell surface to facilitate additional iron uptake in the brain. Regulates synaptic transmission by regulating the luminal pH of axonal endosomes. Regulates phagosome lumenal pH, thus affecting phagosome maturation, and consequently, microbicidal activity in macrophages. Can also be active at the cell surface of specialized cells, e.g., in the inner ear hair bundles uses the high K(+) of the endolymph to regulate intracelular pH. The protein is Sodium/hydrogen exchanger 9 (SLC9A9) of Equus caballus (Horse).